A 342-amino-acid chain; its full sequence is Ferredoxin--NADP reductase (342 aa).

FAD-binding residues include C17, D36, Q44, Y49, I89, F124, D289, and T330.

The protein belongs to the ferredoxin--NADP reductase type 2 family. As to quaternary structure, homodimer. Requires FAD as cofactor.

The enzyme catalyses 2 reduced [2Fe-2S]-[ferredoxin] + NADP(+) + H(+) = 2 oxidized [2Fe-2S]-[ferredoxin] + NADPH. The chain is Ferredoxin--NADP reductase from Rhodopseudomonas palustris (strain BisB18).